The primary structure comprises 176 residues: Crossover junction endodeoxyribonuclease RuvC (176 aa).

Residues Asp9, Glu69, and Asp141 contribute to the active site. Asp9, Glu69, and Asp141 together coordinate Mg(2+).

It belongs to the RuvC family. Homodimer which binds Holliday junction (HJ) DNA. The HJ becomes 2-fold symmetrical on binding to RuvC with unstacked arms; it has a different conformation from HJ DNA in complex with RuvA. In the full resolvosome a probable DNA-RuvA(4)-RuvB(12)-RuvC(2) complex forms which resolves the HJ. It depends on Mg(2+) as a cofactor.

It is found in the cytoplasm. It catalyses the reaction Endonucleolytic cleavage at a junction such as a reciprocal single-stranded crossover between two homologous DNA duplexes (Holliday junction).. Its function is as follows. The RuvA-RuvB-RuvC complex processes Holliday junction (HJ) DNA during genetic recombination and DNA repair. Endonuclease that resolves HJ intermediates. Cleaves cruciform DNA by making single-stranded nicks across the HJ at symmetrical positions within the homologous arms, yielding a 5'-phosphate and a 3'-hydroxyl group; requires a central core of homology in the junction. The consensus cleavage sequence is 5'-(A/T)TT(C/G)-3'. Cleavage occurs on the 3'-side of the TT dinucleotide at the point of strand exchange. HJ branch migration catalyzed by RuvA-RuvB allows RuvC to scan DNA until it finds its consensus sequence, where it cleaves and resolves the cruciform DNA. The protein is Crossover junction endodeoxyribonuclease RuvC of Chromobacterium violaceum (strain ATCC 12472 / DSM 30191 / JCM 1249 / CCUG 213 / NBRC 12614 / NCIMB 9131 / NCTC 9757 / MK).